Here is an 845-residue protein sequence, read N- to C-terminus: Proto-oncogene vav (845 aa).

The region spanning 1-119 (MELWRQCTHW…YTLSALSWTP (119 aa)) is the Calponin-homology (CH) domain. Residues 194 to 373 (KRCCCLREIQ…RDLAQCVNEV (180 aa)) form the DH domain. In terms of domain architecture, PH spans 402–504 (RPKIDGELKI…WMEQFEMAIS (103 aa)). A Phorbol-ester/DAG-type zinc finger spans residues 515–564 (GHDFQMFSFEETTSCKACQMLLRGTFYQGYRCHRCRASAHKECLGRVPPC). In terms of domain architecture, SH3 1 spans 592–660 (LGLPKMEVFQ…PCNRVKPYVH (69 aa)). An SH2 domain is found at 671–765 (WYAGPMERAG…SLDTTLQFPF (95 aa)). Residues 782–842 (KYFGTAKARY…PANYVEEDYS (61 aa)) enclose the SH3 2 domain. Phosphotyrosine occurs at positions 826 and 844.

In terms of assembly, interacts with SHB. Interacts with SH2B2, GRB2, GRB3, DOCK2, SLA, TEC and ZNF655/VIK. Interacts with SIAH2; without leading to its degradation. Associates with BLNK, PLCG1, GRB2 and NCK1 in a B-cell antigen receptor-dependent fashion. Interacts with CBLB; which inhibits tyrosine phosphorylation and down-regulates activity. May interact with CCPG1. Interacts with CLNK. Interacts with THEMIS2. Interacts with NEK3 and this interaction is prolactin-dependent. Interacts with ITK. Interacts with PTK2B/PYK2. Interacts with HCK. Interacts with PTK2B/PYK2. Interacts (via SH2 domain) with SYK. Interacts with ANKRD54. Interacts with CD6. Interacts with isoform 2 of CRACR2A. Interacts with LCP2; this interaction plays a role in TCR-mediated cytokine production. Post-translationally, phosphorylated on tyrosine residues by HCK in response to IFNG and bacterial lipopolysaccharide (LPS). Phosphorylated by FYN. As to expression, widely expressed in hematopoietic cells but not in other cell types.

Couples tyrosine kinase signals with the activation of the Rho/Rac GTPases, thus leading to cell differentiation and/or proliferation. The protein is Proto-oncogene vav (VAV1) of Homo sapiens (Human).